Here is a 250-residue protein sequence, read N- to C-terminus: 1-(5-phosphoribosyl)-5-[(5-phosphoribosylamino)methylideneamino] imidazole-4-carboxamide isomerase (250 aa).

The Proton acceptor role is filled by aspartate 12. Aspartate 134 serves as the catalytic Proton donor.

This sequence belongs to the HisA/HisF family.

The protein resides in the cytoplasm. The enzyme catalyses 1-(5-phospho-beta-D-ribosyl)-5-[(5-phospho-beta-D-ribosylamino)methylideneamino]imidazole-4-carboxamide = 5-[(5-phospho-1-deoxy-D-ribulos-1-ylimino)methylamino]-1-(5-phospho-beta-D-ribosyl)imidazole-4-carboxamide. It functions in the pathway amino-acid biosynthesis; L-histidine biosynthesis; L-histidine from 5-phospho-alpha-D-ribose 1-diphosphate: step 4/9. The protein is 1-(5-phosphoribosyl)-5-[(5-phosphoribosylamino)methylideneamino] imidazole-4-carboxamide isomerase of Actinobacillus pleuropneumoniae serotype 5b (strain L20).